Reading from the N-terminus, the 286-residue chain is MPADKKQRKGAHPYRKPRPNPSDPSSSDKPARPKPTHRIPATEARDGAGIPGLSKLKSSIRQTKRLLAKENLEPGLRVSTQRRLTSLEADLAAAERREVERKNGAKYHKVKFFERQKLVRLIKRFKRKLLDSETSSKKRSKHEEELLDARIMLNYVLHYPNTQKYISLFPSNPNQTEDEDDDDDSSKPKLKLPPLLHPVPSTEECEKMDKPTKRRYDLLLETKRLMEESKLKSEPETDLKKGQVDGVVVGLGADVQIGLGDKKEAKQNAAQGTGEEEDDFFESGDE.

A compositionally biased stretch (basic residues) spans 1 to 18 (MPADKKQRKGAHPYRKPR). Disordered regions lie at residues 1 to 57 (MPAD…SKLK), 167 to 213 (SLFP…KPTK), and 259 to 286 (LGDK…SGDE). Positions 53 to 103 (LSKLKSSIRQTKRLLAKENLEPGLRVSTQRRLTSLEADLAAAERREVERKN) form a coiled coil. Over residues 204 to 213 (ECEKMDKPTK) the composition is skewed to basic and acidic residues. The span at 274–286 (GEEEDDFFESGDE) shows a compositional bias: acidic residues.

The protein belongs to the EFG1 family.

The protein resides in the nucleus. The protein localises to the nucleolus. Functionally, involved in rRNA processing. This is rRNA-processing protein EFG1 (EFG1) from Cryptococcus neoformans var. neoformans serotype D (strain B-3501A) (Filobasidiella neoformans).